Reading from the N-terminus, the 262-residue chain is Glutamate racemase (262 aa).

Substrate is bound by residues 10 to 11 (DS) and 42 to 43 (FG). Cysteine 74 (proton donor/acceptor) is an active-site residue. 75-76 (NT) is a binding site for substrate. The active-site Proton donor/acceptor is cysteine 189. 190–191 (TH) serves as a coordination point for substrate.

This sequence belongs to the aspartate/glutamate racemases family.

It carries out the reaction L-glutamate = D-glutamate. Its pathway is cell wall biogenesis; peptidoglycan biosynthesis. In terms of biological role, provides the (R)-glutamate required for cell wall biosynthesis. The sequence is that of Glutamate racemase from Mesorhizobium japonicum (strain LMG 29417 / CECT 9101 / MAFF 303099) (Mesorhizobium loti (strain MAFF 303099)).